A 232-amino-acid polypeptide reads, in one-letter code: Clarin-1 (232 aa).

A helical transmembrane segment spans residues 8–28 (IIFCMAGVFSFACALGVVTAL). Asn48 carries an N-linked (GlcNAc...) asparagine glycan. Transmembrane regions (helical) follow at residues 101–121 (VILFSAILIVLTMVGTAFFMY), 135–155 (LGLYLLSFISGSCGCLVMILF), and 186–206 (TTSFWVIFFCFFVHFLNGLLI).

Belongs to the clarin family. In terms of tissue distribution, widely expressed. Found in the retina.

Its subcellular location is the cell membrane. In terms of biological role, may have a role in the excitatory ribbon synapse junctions between hair cells and cochlear ganglion cells and presumably also in analogous synapses within the retina. In Homo sapiens (Human), this protein is Clarin-1 (CLRN1).